Consider the following 449-residue polypeptide: Packaging protein 1 (449 aa).

A disordered region spans residues 1–78; sequence METRGRRPAA…PAKRGDMLDR (78 aa). 171–178 serves as a coordination point for ATP; that stretch reads GPTGCGKS. The segment at 440 to 449 is DNA-binding; it reads RAYRARKTPK.

The protein belongs to the adenoviridae packaging protein 1 family. As to quaternary structure, homodimer. Part of a genome packaging complex composed of packaging proteins 1, 2 and 3; this complex specifically binds to the packaging sequence on the left end of viral genomic DNA and performs packaging of the viral genome. Interacts with protein 33K.

It is found in the virion. The protein localises to the host nucleus. The protein resides in the host nucleoplasm. It localises to the host nucleolus. Its function is as follows. Component of the packaging machinery which encapsidates the viral DNA into preformed capsids and transcriptional activator of the viral major late promoter (MLP). Binds, along with packaging proteins 2 and 3, to the specific packaging sequence on the left end of viral genomic DNA and displays ATPase activity thereby providing the power stroke of the packaging machinery. The activity of packaging protein IVa2 is stimulated by protein 33K which acts as a terminase. May be the protein that pumps DNA into the capsid powered by ATP hydrolysis. Specifically binds to the 5'-CG-3' nucleotides of the repeats making up the packaging sequence. Component of the DEF-A and DEF-B transcription factors that bind downstream elements of the major late promoter (MLP), and stimulate transcription from the MLP after initiation of viral DNA replication. DEF-A is a heterodimer packaging proteins 1 and 2 and DEF-B is a homodimer of packaging protein 1. This is Packaging protein 1 from Human adenovirus C serotype 5 (HAdV-5).